The chain runs to 257 residues: NAD kinase (257 aa).

D46 (proton acceptor) is an active-site residue. NAD(+) contacts are provided by residues 46–47 (DG), 116–117 (NE), D146, A154, 157–162 (TAYNLS), and N218.

It belongs to the NAD kinase family. Requires a divalent metal cation as cofactor.

The protein resides in the cytoplasm. It catalyses the reaction NAD(+) + ATP = ADP + NADP(+) + H(+). Involved in the regulation of the intracellular balance of NAD and NADP, and is a key enzyme in the biosynthesis of NADP. Catalyzes specifically the phosphorylation on 2'-hydroxyl of the adenosine moiety of NAD to yield NADP. The protein is NAD kinase of Brucella suis biovar 1 (strain 1330).